A 611-amino-acid chain; its full sequence is Large ribosomal subunit assembly factor BipA (611 aa).

Residues 7–202 (KNLRNIAIIA…AIVKYTPPPT (196 aa)) form the tr-type G domain. Residues 19–24 (DHGKTT) and 132–135 (NKID) each bind GTP.

The protein belongs to the TRAFAC class translation factor GTPase superfamily. Classic translation factor GTPase family. BipA subfamily. In terms of assembly, monomer.

Its subcellular location is the cytoplasm. It carries out the reaction GTP + H2O = GDP + phosphate + H(+). In terms of biological role, a 50S ribosomal subunit assembly protein with GTPase activity, required for 50S subunit assembly at low temperatures, may also play a role in translation. Binds GTP and analogs. Binds the 70S ribosome between the 30S and 50S subunits, in a similar position as ribosome-bound EF-G; it contacts a number of ribosomal proteins, both rRNAs and the A-site tRNA. This is Large ribosomal subunit assembly factor BipA from Buchnera aphidicola subsp. Baizongia pistaciae (strain Bp).